A 373-amino-acid chain; its full sequence is Muscleblind-like protein 2 (373 aa).

4 C3H1-type zinc fingers span residues 13–41 (WLTL…HPPK), 47–73 (NGRV…HPPT), 176–204 (TDKL…HPAD), and 212–238 (DNTV…HPPA).

Belongs to the muscleblind family. Interacts with ITGA3.

It is found in the nucleus. Its subcellular location is the cytoplasm. Its function is as follows. Mediates pre-mRNA alternative splicing regulation. Acts either as activator or repressor of splicing on specific pre-mRNA targets. Inhibits cardiac troponin-T (TNNT2) pre-mRNA exon inclusion but induces insulin receptor (IR) pre-mRNA exon inclusion in muscle. Antagonizes the alternative splicing activity pattern of CELF proteins. RNA-binding protein that binds to 5'ACACCC-3' core sequence, termed zipcode, within the 3'UTR of ITGA3. Binds to CUG triplet repeat expansion in myotonic dystrophy muscle cells by sequestering the target RNAs. Together with RNA binding proteins RBPMS and RBFOX2, activates vascular smooth muscle cells alternative splicing events. Regulates NCOR2 alternative splicing. Seems to regulate expression and localization of ITGA3 by transporting it from the nucleus to cytoplasm at adhesion plaques. May play a role in myotonic dystrophy pathophysiology (DM). The polypeptide is Muscleblind-like protein 2 (Mbnl2) (Mus musculus (Mouse)).